The following is a 96-amino-acid chain: UPF0166 protein aq_448 (96 aa).

This sequence belongs to the UPF0166 family.

The chain is UPF0166 protein aq_448 from Aquifex aeolicus (strain VF5).